We begin with the raw amino-acid sequence, 1150 residues long: Pesticidal crystal protein Cry9Ea (1150 aa).

It belongs to the delta endotoxin family.

Promotes colloidosmotic lysis by binding to the midgut epithelial cells of insects. The polypeptide is Pesticidal crystal protein Cry9Ea (cry9Ea) (Bacillus thuringiensis subsp. aizawai).